The sequence spans 63 residues: uncharacterized protein (63 aa).

Residues 15–37 (ISHCHLPLSPATAIAIIICFRIV) form a helical membrane-spanning segment.

It localises to the membrane. This is an uncharacterized protein from Saccharomyces cerevisiae (strain ATCC 204508 / S288c) (Baker's yeast).